The following is a 246-amino-acid chain: Ubiquinone biosynthesis O-methyltransferase (246 aa).

S-adenosyl-L-methionine-binding residues include arginine 44, glycine 63, aspartate 84, and methionine 128.

The protein belongs to the methyltransferase superfamily. UbiG/COQ3 family.

It catalyses the reaction a 3-demethylubiquinol + S-adenosyl-L-methionine = a ubiquinol + S-adenosyl-L-homocysteine + H(+). It carries out the reaction a 3-(all-trans-polyprenyl)benzene-1,2-diol + S-adenosyl-L-methionine = a 2-methoxy-6-(all-trans-polyprenyl)phenol + S-adenosyl-L-homocysteine + H(+). It functions in the pathway cofactor biosynthesis; ubiquinone biosynthesis. Its function is as follows. O-methyltransferase that catalyzes the 2 O-methylation steps in the ubiquinone biosynthetic pathway. The sequence is that of Ubiquinone biosynthesis O-methyltransferase from Xylella fastidiosa (strain Temecula1 / ATCC 700964).